Consider the following 164-residue polypeptide: Crossover junction endodeoxyribonuclease RuvC (164 aa).

Residues aspartate 7, glutamate 67, and aspartate 140 contribute to the active site. 3 residues coordinate Mg(2+): aspartate 7, glutamate 67, and aspartate 140.

This sequence belongs to the RuvC family. Homodimer which binds Holliday junction (HJ) DNA. The HJ becomes 2-fold symmetrical on binding to RuvC with unstacked arms; it has a different conformation from HJ DNA in complex with RuvA. In the full resolvosome a probable DNA-RuvA(4)-RuvB(12)-RuvC(2) complex forms which resolves the HJ. It depends on Mg(2+) as a cofactor.

It localises to the cytoplasm. It catalyses the reaction Endonucleolytic cleavage at a junction such as a reciprocal single-stranded crossover between two homologous DNA duplexes (Holliday junction).. The RuvA-RuvB-RuvC complex processes Holliday junction (HJ) DNA during genetic recombination and DNA repair. Endonuclease that resolves HJ intermediates. Cleaves cruciform DNA by making single-stranded nicks across the HJ at symmetrical positions within the homologous arms, yielding a 5'-phosphate and a 3'-hydroxyl group; requires a central core of homology in the junction. The consensus cleavage sequence is 5'-(A/T)TT(C/G)-3'. Cleavage occurs on the 3'-side of the TT dinucleotide at the point of strand exchange. HJ branch migration catalyzed by RuvA-RuvB allows RuvC to scan DNA until it finds its consensus sequence, where it cleaves and resolves the cruciform DNA. The protein is Crossover junction endodeoxyribonuclease RuvC of Alkaliphilus oremlandii (strain OhILAs) (Clostridium oremlandii (strain OhILAs)).